Reading from the N-terminus, the 358-residue chain is Probable RNA methyltransferase MXAN_6459 (358 aa).

Residue Glu-92 is the Proton acceptor of the active site. The 229-residue stretch at Phe-99–Lys-327 folds into the Radical SAM core domain. Cys-106 and Cys-333 are disulfide-bonded. Residues Cys-113, Cys-117, and Cys-120 each coordinate [4Fe-4S] cluster. S-adenosyl-L-methionine contacts are provided by residues Gly-160–Glu-161, Ser-192, Ser-215–Thr-217, and Asp-289. The S-methylcysteine intermediate role is filled by Cys-333.

The protein belongs to the radical SAM superfamily. RlmN family. Requires [4Fe-4S] cluster as cofactor.

The protein localises to the cytoplasm. This chain is Probable RNA methyltransferase MXAN_6459, found in Myxococcus xanthus (strain DK1622).